The following is a 265-amino-acid chain: Undecaprenyl-diphosphatase (265 aa).

7 helical membrane passes run 38 to 58 (SDMFNIVIQAGAILAVTIIYW), 80 to 100 (LIVAFLITAILGLVVKKLGFE), 107 to 127 (PIAWALIIGGIWMIFAEWAAA), 135 to 155 (ITWLVAILVGIAQIVAGVFPG), 178 to 198 (TEFAFLVGIPTMYAASAYELL), 216 to 236 (IAFVVSTVVAFIAVKWLLAYI), and 244 to 264 (FAIYRIILGVLLLGMAATGLI).

This sequence belongs to the UppP family.

It localises to the cell inner membrane. It catalyses the reaction di-trans,octa-cis-undecaprenyl diphosphate + H2O = di-trans,octa-cis-undecaprenyl phosphate + phosphate + H(+). Its function is as follows. Catalyzes the dephosphorylation of undecaprenyl diphosphate (UPP). Confers resistance to bacitracin. This Rhizobium johnstonii (strain DSM 114642 / LMG 32736 / 3841) (Rhizobium leguminosarum bv. viciae) protein is Undecaprenyl-diphosphatase.